The sequence spans 200 residues: Small ribosomal subunit protein eS1 (200 aa).

The protein belongs to the eukaryotic ribosomal protein eS1 family. In terms of assembly, part of the 30S ribosomal subunit.

This is Small ribosomal subunit protein eS1 from Thermococcus kodakarensis (strain ATCC BAA-918 / JCM 12380 / KOD1) (Pyrococcus kodakaraensis (strain KOD1)).